We begin with the raw amino-acid sequence, 634 residues long: MKAVLLLLYALGIAAAVPTTFLSDHSNPTSATLPTLEDATVPTVPAEAAADIEKHPNHKAEKPSALNSEEEAHEQSTEQDKTYSFEVDLKDEEDGDGDLSVDPTERTLDLQEGTSEPQQKRLPENADFPATVSTPFVDSDQPANITKGEESQEQPVSDSHQQQDESGKQTQDSMTEESHKQDPGIPNEEKEEEEDPEDVGAPSDNQEEEKEPPEEQPTSKWEGNGDQSEDILQESSQPTQISKTKNDFEQGSQGQEGDSNAEGEDKAAGSKEHLPHTEWQGQEGRAGLDAIGNRKDTDEEKAVSTEPTDAAVVPRNHGASDNGGGDDSKHGASDDYFIPSQEFLEAERMHSLSYYLKYGEETPDESENRSEAGDNQGAKKAESSPNAEPSDEGNSRGHSADSCMNFQCKRGHTCKTDQHGKPHCVCQDPETCPPAKILDQACGTDNQTYASSCHLFATKCMLEGTKKGHQLQLDYFGACKSIPACTDFEVAQFPLRMRDWLKNILMQLYEPNPKHGGYLNEKQRSKVKKIYLDEKRLLAGDHPIELLLRDFKKNYHMYVYPVHWQFNELDQHPADRILTHSELAPLRASLVPMEHCITRFFEECDPNKDKHITLKEWGHCFGIKEEDIDENLLF.

The first 16 residues, 1–16 (MKAVLLLLYALGIAAA), serve as a signal peptide directing secretion. The interval 50-335 (ADIEKHPNHK…DDSKHGASDD (286 aa)) is disordered. Positions 51–62 (DIEKHPNHKAEK) are enriched in basic and acidic residues. A phosphoserine mark is found at S68, S76, and S84. Residues 73–83 (HEQSTEQDKTY) show a composition bias toward basic and acidic residues. Residues 89–99 (LKDEEDGDGDL) are compositionally biased toward acidic residues. Positions 131-144 (TVSTPFVDSDQPAN) are enriched in polar residues. N144 carries an N-linked (GlcNAc...) asparagine glycan. Phosphoserine is present on residues S151 and S159. Acidic residues-rich tracts occupy residues 189–198 (EKEEEEDPED) and 205–214 (NQEEEKEPPE). Over residues 233 to 258 (QESSQPTQISKTKNDFEQGSQGQEGD) the composition is skewed to polar residues. S259 is subject to Phosphoserine. 2 stretches are compositionally biased toward basic and acidic residues: residues 263–276 (GEDK…HLPH) and 292–303 (GNRKDTDEEKAV). Phosphoserine is present on residues S333 and S340. Residues 360–398 (EETPDESENRSEAGDNQGAKKAESSPNAEPSDEGNSRGH) form a disordered region. Residues 366–382 (SENRSEAGDNQGAKKAE) show a composition bias toward basic and acidic residues. N368 is a glycosylation site (N-linked (GlcNAc...) asparagine). Phosphoserine occurs at positions 370 and 390. One can recognise a Follistatin-like domain in the interval 402–424 (SCMNFQCKRGHTCKTDQHGKPHC). Cystine bridges form between C403-C414, C408-C424, C426-C460, C432-C453, C442-C479, C485-C596, and C604-C620. The 62-residue stretch at 420–481 (GKPHCVCQDP…QLDYFGACKS (62 aa)) folds into the Kazal-like domain. N446 carries an N-linked (GlcNAc...) asparagine glycan. The EF-hand domain maps to 592-627 (PMEHCITRFFEECDPNKDKHITLKEWGHCFGIKEED). 5 residues coordinate Ca(2+): D605, N607, D609, H611, and E616.

The protein belongs to the SPARC family. In terms of tissue distribution, expressed in many types of neurons in the brain.

The protein resides in the secreted. It localises to the extracellular space. Its subcellular location is the extracellular matrix. This is SPARC-like protein 1 (Sparcl1) from Rattus norvegicus (Rat).